The chain runs to 355 residues: Zinc finger protein CONSTANS-LIKE 1 (355 aa).

Residues C12, C15, C35, H40, C55, C58, C78, and H83 each coordinate Zn(2+). The segment at C12–V54 adopts a B box-type 1; atypical zinc-finger fold. The B box-type 2; atypical zinc finger occupies C55 to I97. Polar residues predominate over residues E252–R264. Residues E252–L281 are disordered. One can recognise a CCT domain in the interval R286 to K328.

The protein belongs to the CONSTANS family. In terms of tissue distribution, highly expressed in leaves and at lower levels in stems, flowers and siliques. Not detected in roots.

The protein resides in the nucleus. Putative transcription factor that may be involved in the light input to the circadian clock but does not affect flowering time. The sequence is that of Zinc finger protein CONSTANS-LIKE 1 (COL1) from Arabidopsis thaliana (Mouse-ear cress).